A 474-amino-acid chain; its full sequence is Ankyrin repeat, SAM and basic leucine zipper domain-containing protein 1 (474 aa).

The interval 1 to 31 (MAGRLRGPAVPGGGESSDSDEDGWDIGYTER) is disordered. 3 positions are modified to phosphoserine: Ser16, Ser17, and Ser19. ANK repeat units lie at residues 43 to 72 (EKDE…QVDS), 76 to 105 (FGWT…NASF), 108 to 142 (DQHT…SPNA), 146 to 175 (KRMS…EINA), 179 to 208 (NGYT…DKTL), and 212 to 241 (DGKT…PLHG). The SAM domain occupies 270–333 (SYSAFGDLEI…KIMDAVEELQ (64 aa)).

In terms of assembly, interacts with DDX4, PIWIL1, RANBP9 and TDRD1.

It is found in the cytoplasm. Plays a central role during spermatogenesis by repressing transposable elements and preventing their mobilization, which is essential for the germline integrity. Acts via the piRNA metabolic process, which mediates the repression of transposable elements during meiosis by forming complexes composed of piRNAs and Piwi proteins and governs the methylation and subsequent repression of transposons. Its association with pi-bodies suggests a participation in the primary piRNAs metabolic process. Required prior to the pachytene stage to facilitate the production of multiple types of piRNAs, including those associated with repeats involved in the regulation of retrotransposons. May act by mediating protein-protein interactions during germ cell maturation. The chain is Ankyrin repeat, SAM and basic leucine zipper domain-containing protein 1 (ASZ1) from Ornithorhynchus anatinus (Duckbill platypus).